The sequence spans 281 residues: Auxin-responsive protein IAA10 (281 aa).

Disordered regions lie at residues 1–115 (MRGG…VVGW) and 130–157 (AKEN…EEGE). A compositionally biased stretch (low complexity) spans 7–17 (GPTAGEPPGTE). Positions 18–35 (AEAEEVEESSAGDDEELE) are enriched in acidic residues. An EAR-like (transcriptional repression) motif is present at residues 36–40 (LGLSL). Composition is skewed to low complexity over residues 36–49 (LGLS…QQQQ) and 63–84 (PAAA…AAAA). Over residues 133-157 (NTSETDTKKTATNESDVQKDKEEGE) the composition is skewed to basic and acidic residues. In terms of domain architecture, PB1 spans 163–259 (AGWVKVNMDG…KRLRIMRTSD (97 aa)).

The protein belongs to the Aux/IAA family. As to quaternary structure, homodimers and heterodimers. Highly expressed in flowers. Expressed in shoots.

It localises to the nucleus. Functionally, aux/IAA proteins are short-lived transcriptional factors that function as repressors of early auxin response genes at low auxin concentrations. This Oryza sativa subsp. indica (Rice) protein is Auxin-responsive protein IAA10 (IAA10).